A 554-amino-acid chain; its full sequence is MYHPHHLPAHGQVQSHQHREDAAATSSRDVNGGLSVTESAIASFRSLREKYPPKKLTRDAMRRYLKDPNDQTLIVLHAKVAQKSYGNEKRFFCPPPCMYLLGNGWKRKQQILEEEEGSSEAGQLHAFIGIGSSEQEMQQLHLDGKNFCTAKTLYISDTDKRKHFMLNVKMFFGGGGADVGQFSSKRIKVISKPSKKKQSLKNADLCIASGTKVALFNRLRSQTVSTRYLHVEKGNFHASSIQWGCFAIHLLDDDESESEEFSVVDGYIHYGQTVKLVCSNTGMALPRLIIRKVDKQTAILDADDPVSQLHKCAFYLKDTERMYLCLSQERIIQFQATPCPKETNKEMINDGASWTIISTDKAEYTFCDGMGPTADPVTPVPNVHSLQLNGGGDVAMLEVNGECFTSNLKVWFGEIEADTMFRCAEGLLCVVPDISAFREGWKWVKESVQVPINLVRNDGVIYPTNLTFTFTPEPGPRQHCPAALNILHGSKRPSASMPPTPVSGSEDDSGRGNESDRGDPIMPIKRPALDVHGRPVAPEAAATMNGANMLRTAS.

Residues 1 to 31 form a disordered region; the sequence is MYHPHHLPAHGQVQSHQHREDAAATSSRDVN. DNA-binding regions lie at residues 83-90, 218-227, and 291-323; these read KSYGNEKR, RLRSQTVSTR, and RKVD…ERMY. The IPT/TIG domain maps to 381 to 471; the sequence is PNVHSLQLNG…YPTNLTFTFT (91 aa). A disordered region spans residues 489 to 554; sequence GSKRPSASMP…NGANMLRTAS (66 aa). The segment covering 508 to 519 has biased composition (basic and acidic residues); sequence DSGRGNESDRGD.

It belongs to the Su(H) family. As to quaternary structure, interacts with activated Notch proteins.

It localises to the nucleus. Transcriptional regulator that plays a central role in Notch signaling, a signaling pathway involved in cell-cell communication that regulates a broad spectrum of cell-fate determinations. Acts as a transcriptional repressor when it is not associated with Notch proteins. When associated with some Notch protein, it acts as a transcriptional activator that activates transcription of Notch target genes. Required for the transcriptional expression of Brachyury, suggesting that it participates in notochord differentiation. The protein is Suppressor of hairless homolog (Su(H)) of Ciona intestinalis (Transparent sea squirt).